The sequence spans 189 residues: Ribose 1,5-bisphosphate phosphokinase PhnN (189 aa).

10–17 (GPSGSGKD) serves as a coordination point for ATP.

Belongs to the ribose 1,5-bisphosphokinase family.

It carries out the reaction alpha-D-ribose 1,5-bisphosphate + ATP = 5-phospho-alpha-D-ribose 1-diphosphate + ADP. It functions in the pathway metabolic intermediate biosynthesis; 5-phospho-alpha-D-ribose 1-diphosphate biosynthesis; 5-phospho-alpha-D-ribose 1-diphosphate from D-ribose 5-phosphate (route II): step 3/3. Its function is as follows. Catalyzes the phosphorylation of ribose 1,5-bisphosphate to 5-phospho-D-ribosyl alpha-1-diphosphate (PRPP). The chain is Ribose 1,5-bisphosphate phosphokinase PhnN from Enterobacter lignolyticus (strain SCF1).